Reading from the N-terminus, the 565-residue chain is Translation machinery-associated protein 64 (565 aa).

The 82-residue stretch at 89-170 folds into the PUA domain; sequence LPIVLTHGFV…VAVKIIHHFN (82 aa). Positions 362-447 constitute an SWIB/MDM2 domain; that stretch reads TLYKPFNLAK…GEILHPLLTN (86 aa). In terms of domain architecture, SUI1 spans 475–547; the sequence is IKIITEMKIG…SIIDHLNKLG (73 aa).

Belongs to the eIF2D family. As to quaternary structure, interacts with the 40S ribosomal subunit.

This chain is Translation machinery-associated protein 64 (TMA64), found in Saccharomyces cerevisiae (strain ATCC 204508 / S288c) (Baker's yeast).